The chain runs to 181 residues: Shikimate kinase 2 (181 aa).

Residue 12-17 (GCGKTT) coordinates ATP. Mg(2+)-binding residues include Thr-16 and Asp-32. Residues Asp-34, Arg-58, and Gly-79 each contribute to the substrate site. The segment at 112-126 (EAEPEADLRPTLTGK) is LID domain. An ATP-binding site is contributed by Arg-120. Arg-139 contacts substrate.

The protein belongs to the shikimate kinase family. AroL subfamily. Monomer. It depends on Mg(2+) as a cofactor.

The protein localises to the cytoplasm. The catalysed reaction is shikimate + ATP = 3-phosphoshikimate + ADP + H(+). Its pathway is metabolic intermediate biosynthesis; chorismate biosynthesis; chorismate from D-erythrose 4-phosphate and phosphoenolpyruvate: step 5/7. In terms of biological role, catalyzes the specific phosphorylation of the 3-hydroxyl group of shikimic acid using ATP as a cosubstrate. The sequence is that of Shikimate kinase 2 from Salmonella heidelberg (strain SL476).